The following is a 427-amino-acid chain: Gamma-glutamyl phosphate reductase (427 aa).

The protein belongs to the gamma-glutamyl phosphate reductase family.

It is found in the cytoplasm. The enzyme catalyses L-glutamate 5-semialdehyde + phosphate + NADP(+) = L-glutamyl 5-phosphate + NADPH + H(+). Its pathway is amino-acid biosynthesis; L-proline biosynthesis; L-glutamate 5-semialdehyde from L-glutamate: step 2/2. Its function is as follows. Catalyzes the NADPH-dependent reduction of L-glutamate 5-phosphate into L-glutamate 5-semialdehyde and phosphate. The product spontaneously undergoes cyclization to form 1-pyrroline-5-carboxylate. The chain is Gamma-glutamyl phosphate reductase from Allorhizobium ampelinum (strain ATCC BAA-846 / DSM 112012 / S4) (Agrobacterium vitis (strain S4)).